The following is a 122-amino-acid chain: Large ribosomal subunit protein uL14 (122 aa).

The protein belongs to the universal ribosomal protein uL14 family. As to quaternary structure, part of the 50S ribosomal subunit. Forms a cluster with proteins L3 and L19. In the 70S ribosome, L14 and L19 interact and together make contacts with the 16S rRNA in bridges B5 and B8.

In terms of biological role, binds to 23S rRNA. Forms part of two intersubunit bridges in the 70S ribosome. The chain is Large ribosomal subunit protein uL14 from Gloeothece citriformis (strain PCC 7424) (Cyanothece sp. (strain PCC 7424)).